A 76-amino-acid chain; its full sequence is Alpha-amylase inhibitor Z-2685 (76 aa).

2 cysteine pairs are disulfide-bonded: Cys9–Cys25 and Cys43–Cys70.

Its function is as follows. Inhibits mammalian alpha-amylases specifically but has no action on plant and microbial alpha-amylases. The sequence is that of Alpha-amylase inhibitor Z-2685 from Streptomyces rochei (Streptomyces parvullus).